The sequence spans 372 residues: Putative glutamate--cysteine ligase 2 (372 aa).

The protein belongs to the glutamate--cysteine ligase type 2 family. YbdK subfamily. As to quaternary structure, homodimer.

It catalyses the reaction L-cysteine + L-glutamate + ATP = gamma-L-glutamyl-L-cysteine + ADP + phosphate + H(+). In terms of biological role, ATP-dependent carboxylate-amine ligase which exhibits weak glutamate--cysteine ligase activity. The polypeptide is Putative glutamate--cysteine ligase 2 (ybdK) (Salmonella arizonae (strain ATCC BAA-731 / CDC346-86 / RSK2980)).